We begin with the raw amino-acid sequence, 178 residues long: Ribulose bisphosphate carboxylase small subunit, chloroplastic (178 aa).

The transit peptide at 1–54 (MALISSAAVTTINRAPVQANLATPFTGLKSSAGFPVTKKNNDITSITSNGSRVN) directs the protein to the chloroplast.

Belongs to the RuBisCO small chain family. Heterohexadecamer of 8 large and 8 small subunits.

It is found in the plastid. The protein localises to the chloroplast. Functionally, ruBisCO catalyzes two reactions: the carboxylation of D-ribulose 1,5-bisphosphate, the primary event in carbon dioxide fixation, as well as the oxidative fragmentation of the pentose substrate. Both reactions occur simultaneously and in competition at the same active site. Although the small subunit is not catalytic it is essential for maximal activity. The polypeptide is Ribulose bisphosphate carboxylase small subunit, chloroplastic (Trifolium repens (Creeping white clover)).